Here is a 996-residue protein sequence, read N- to C-terminus: MEAAALLSPTATSRSPLPLLSTAPAAHRLHVLLPLSGRRRRLCLRSSPRPRGSLGCAGDCVVRSMGSSRERGVLVKTSSSSASVESATQEVGAASSGEWSGDAIRRRFLDFYAARGHKILPSSSLVPDDPTVFLTIAGMLQFKPIFLGKEPRRVPCATTSQKCIRTNDIENVGRTSRHQTFFEMLGNFSFGDYFKKEAITWAWELTTKEFGLPPERLWISVFQDDDEAFSIWHNEVGVPKERIKRLGEDDNFWTSGATGPCGPCSEIYYDFYPERGSSDADLGDDSRFIEFYNLVFMQYNKKDDGSLEPLKQKNIDTGMGLERMARILQKVPNNYETDLIFPIIEKAASMALVSYTTADDAMKTNLKIIGDHMRAVVYLISDGVIPSNIGRGYVVRRLIRRVVRTGRLIGIRGDGHGNSEGAFLPSLAEVAISLSTEIDPDVESRRKSILGELQREELRFVQTLERGEKLLDELLDEALSSAGNNGGKPCLSGKDVFLLYDTYGFPVEITAEIAGERGVIVDMKGFDMEMENQRKQSQAAHNVVKLSVGNETEIVKSIPDTEFLGYDSLSATAVVKGLLVNGNSVNVVSEGSDVEIFLDRTPFYAESGGQVGDNGFLYVYGEEDAKQKAVIEINDVQKSLGNIFVHKGTIKQGSVEVGKEIDAAVDAKLRQGAKAHHTATHLLQSALKSIIGSETSQAGSLVAFDRLRFDFNFHRPLSEEELMKIESLVNQWVSSATHLETKVMDLQDAKNAGAIAMFGEKYGEQVRVVEVPGVSMELCGGTHVSNTAEIRGFKIISEQGIASGVRRIEAVAGDAFVEYVCARDNYMRCLCSSLKVKAEDVNGRVETILEELRTTRNEVSSLRSKIAVLKAASLANKATTIDNTRVVVENMGDVDADGLKSAAEYLVDTLEDPAAVILGSSPGDGKVSLVAAFSPGVVKMGIQAGKFVGGIAKLCGGGGGGKPNFAQAGGRKPENLPGALEKARDEIVAAISSKSS.

Residues histidine 677, histidine 681, cysteine 779, and histidine 783 each coordinate Zn(2+).

It belongs to the class-II aminoacyl-tRNA synthetase family. As to quaternary structure, monomer. Requires Zn(2+) as cofactor.

Its subcellular location is the plastid. It is found in the chloroplast. The protein localises to the mitochondrion. It catalyses the reaction tRNA(Ala) + L-alanine + ATP = L-alanyl-tRNA(Ala) + AMP + diphosphate. Its function is as follows. Catalyzes the attachment of alanine to tRNA(Ala) in a two-step reaction: alanine is first activated by ATP to form Ala-AMP and then transferred to the acceptor end of tRNA(Ala). Also edits incorrectly charged tRNA(Ala) via its editing domain. The polypeptide is Alanine--tRNA ligase, chloroplastic/mitochondrial (Oryza sativa subsp. indica (Rice)).